We begin with the raw amino-acid sequence, 456 residues long: Exodeoxyribonuclease 7 large subunit (456 aa).

Belongs to the XseA family. Heterooligomer composed of large and small subunits.

It localises to the cytoplasm. The catalysed reaction is Exonucleolytic cleavage in either 5'- to 3'- or 3'- to 5'-direction to yield nucleoside 5'-phosphates.. Functionally, bidirectionally degrades single-stranded DNA into large acid-insoluble oligonucleotides, which are then degraded further into small acid-soluble oligonucleotides. This chain is Exodeoxyribonuclease 7 large subunit, found in Shigella boydii serotype 4 (strain Sb227).